The chain runs to 544 residues: Exodeoxyribonuclease 7 large subunit (544 aa).

Positions 522-544 (PETPPKSRKADNPPEPPEQTSFL) are disordered.

This sequence belongs to the XseA family. In terms of assembly, heterooligomer composed of large and small subunits.

The protein resides in the cytoplasm. The enzyme catalyses Exonucleolytic cleavage in either 5'- to 3'- or 3'- to 5'-direction to yield nucleoside 5'-phosphates.. In terms of biological role, bidirectionally degrades single-stranded DNA into large acid-insoluble oligonucleotides, which are then degraded further into small acid-soluble oligonucleotides. In Zymomonas mobilis subsp. mobilis (strain ATCC 31821 / ZM4 / CP4), this protein is Exodeoxyribonuclease 7 large subunit.